Consider the following 147-residue polypeptide: Hemoglobin subunit gamma (147 aa).

Positions 3–147 (DFTAEEKAAI…VASAVARKYH (145 aa)) constitute a Globin domain. Heme b-binding residues include His-64 and His-93.

It belongs to the globin family. In terms of assembly, heterotetramer of two alpha chains and two gamma chains in fetal hemoglobin (Hb F). Red blood cells.

Functionally, gamma chains make up the fetal hemoglobin F, in combination with alpha chains. The chain is Hemoglobin subunit gamma (HBG) from Trichechus manatus (Caribbean manatee).